A 359-amino-acid chain; its full sequence is 3-dehydroquinate synthase (359 aa).

Residues 70-75, 105-109, 129-130, Lys-142, Lys-151, and 169-172 contribute to the NAD(+) site; these read DGEQYK, GVIGD, TT, and FYKT. Residues Glu-184, His-247, and His-264 each contribute to the Zn(2+) site.

This sequence belongs to the sugar phosphate cyclases superfamily. Dehydroquinate synthase family. It depends on Co(2+) as a cofactor. Requires Zn(2+) as cofactor. NAD(+) is required as a cofactor.

The protein resides in the cytoplasm. The catalysed reaction is 7-phospho-2-dehydro-3-deoxy-D-arabino-heptonate = 3-dehydroquinate + phosphate. It functions in the pathway metabolic intermediate biosynthesis; chorismate biosynthesis; chorismate from D-erythrose 4-phosphate and phosphoenolpyruvate: step 2/7. In terms of biological role, catalyzes the conversion of 3-deoxy-D-arabino-heptulosonate 7-phosphate (DAHP) to dehydroquinate (DHQ). This Francisella tularensis subsp. tularensis (strain FSC 198) protein is 3-dehydroquinate synthase.